The primary structure comprises 753 residues: LON peptidase N-terminal domain and RING finger protein 3 (753 aa).

The interval 17 to 57 (GSNNLELAEPEEPGTSAAAGQSAAHPEEVTPEGSQALGAQE) is disordered. One copy of the TPR 1 repeat lies at 72 to 105 (CKVLLTQADALASEGHLREALEVYRQLSERQQLV). The RING-type 1 zinc-finger motif lies at 159–197 (CKKCHGFLSDPVSLWCGHTFCKLCLERGRAADRRCALCG). 3 TPR repeats span residues 244-277 (ASQL…APND), 279-311 (LLYS…RPMG), and 313-345 (KAHF…DGKN). The disordered stretch occupies residues 351 to 450 (EAQRENLELP…QGAKPDLSNP (100 aa)). Residues 363–382 (SNQEGAAAAEESSSLANSAQ) are compositionally biased toward low complexity. Residues 386–413 (SSKEDRKKDQEGEDRDAASVRTGKCQEK) show a composition bias toward basic and acidic residues. The RING-type 2 zinc finger occupies 461–499 (CSLCMRLFYEPVTTPCGHTFCLKCLERCLDHNAKCPLCK). One can recognise a Lon N-terminal domain in the interval 540–749 (MEELSNLNKN…GIRRILAFIS (210 aa)).

The chain is LON peptidase N-terminal domain and RING finger protein 3 (Lonrf3) from Mus musculus (Mouse).